Consider the following 101-residue polypeptide: MSDQEAKPSTEDLGDKKEGEYIKLKVIGQDSSEIHFKVKMTTHLKKLKESYCQRQGVPMNSLRFLFEGQRIADNHTPKELGMEEEDVIEVYQEQTGGHSNV.

S2 is subject to N-acetylserine. A Phosphoserine modification is found at S2. K7 participates in a covalent cross-link: Glycyl lysine isopeptide (Lys-Gly) (interchain with G-Cter in SUMO1); alternate. K7 is covalently cross-linked (Glycyl lysine isopeptide (Lys-Gly) (interchain with G-Cter in SUMO2); alternate). Residue S9 is modified to Phosphoserine. Glycyl lysine isopeptide (Lys-Gly) (interchain with G-Cter in SUMO2) cross-links involve residues K16, K17, and K23. In terms of domain architecture, Ubiquitin-like spans 20–97; the sequence is EYIKLKVIGQ…IEVYQEQTGG (78 aa). Residue K25 forms a Glycyl lysine isopeptide (Lys-Gly) (interchain with G-Cter in SUMO1) linkage. The residue at position 32 (S32) is a Phosphoserine. Glycyl lysine isopeptide (Lys-Gly) (interchain with G-Cter in SUMO2) cross-links involve residues K37, K39, K45, and K46. A Glycyl lysine isopeptide (Gly-Lys) (interchain with K-? in acceptor proteins) cross-link involves residue G97. The propeptide occupies 98–101; the sequence is HSNV.

This sequence belongs to the ubiquitin family. SUMO subfamily. As to quaternary structure, covalently attached to KCNB1; UBE2I increases cross-linking with KCNB1 and PIAS1 decreases cross-links with KCNB1. Interacts with SAE2, RANBP2, PIAS1 and PIAS2. Interacts with PRKN. Covalently attached to a number of proteins such as IKFZ1, PML, RANGAP1, HIPK2, SP100, p53, p73-alpha, MDM2, JUN, DNMT3B and TDG. Also interacts with HIF1A, HIPK2, HIPK3, CHD3, EXOSC9, RAD51 and RAD52. Interacts with USP25 (via ts SIM domain); the interaction weakly sumoylates USP25. Interacts with SIMC1, CASP8AP2, RNF111 and SOBP (via SIM domains). Interacts with BHLHE40/DEC1. Interacts with RWDD3. Interacts with UBE2I/UBC9 and this interaction is enhanced in the presence of RWDD3. Interacts with MTA1. Interacts with SENP2. Interacts with HINT1. In terms of processing, cleavage of precursor form by SENP1 or SENP2 is necessary for function. Post-translationally, polymeric SUMO1 chains undergo polyubiquitination by RNF4.

Its subcellular location is the nucleus membrane. The protein localises to the nucleus speckle. The protein resides in the cytoplasm. It localises to the nucleus. It is found in the PML body. Its subcellular location is the cell membrane. Ubiquitin-like protein that can be covalently attached to proteins as a monomer or a lysine-linked polymer. Covalent attachment via an isopeptide bond to its substrates requires prior activation by the E1 complex SAE1-SAE2 and linkage to the E2 enzyme UBE2I, and can be promoted by E3 ligases such as PIAS1-4, RANBP2 or CBX4. This post-translational modification on lysine residues of proteins plays a crucial role in a number of cellular processes such as nuclear transport, DNA replication and repair, mitosis and signal transduction. Involved for instance in targeting RANGAP1 to the nuclear pore complex protein RANBP2. Covalently attached to the voltage-gated potassium channel KCNB1; this modulates the gating characteristics of KCNB1. Polymeric SUMO1 chains are also susceptible to polyubiquitination which functions as a signal for proteasomal degradation of modified proteins. May be involved in modified proteins. May also regulate a network of genes involved in palate development. Covalently attached to ZFHX3. This chain is Small ubiquitin-related modifier 1 (SUMO1), found in Ictidomys tridecemlineatus (Thirteen-lined ground squirrel).